We begin with the raw amino-acid sequence, 317 residues long: Beta-ketoacyl-[acyl-carrier-protein] synthase III (317 aa).

Residues Cys-112 and His-244 contribute to the active site. The interval 245 to 249 (QANLR) is ACP-binding. The active site involves Asn-274.

The protein belongs to the thiolase-like superfamily. FabH family. As to quaternary structure, homodimer.

It localises to the cytoplasm. The enzyme catalyses malonyl-[ACP] + acetyl-CoA + H(+) = 3-oxobutanoyl-[ACP] + CO2 + CoA. It participates in lipid metabolism; fatty acid biosynthesis. Its function is as follows. Catalyzes the condensation reaction of fatty acid synthesis by the addition to an acyl acceptor of two carbons from malonyl-ACP. Catalyzes the first condensation reaction which initiates fatty acid synthesis and may therefore play a role in governing the total rate of fatty acid production. Possesses both acetoacetyl-ACP synthase and acetyl transacylase activities. Its substrate specificity determines the biosynthesis of branched-chain and/or straight-chain of fatty acids. The polypeptide is Beta-ketoacyl-[acyl-carrier-protein] synthase III (Salmonella typhi).